The sequence spans 207 residues: Redox-sensing transcriptional repressor Rex (207 aa).

The H-T-H motif DNA-binding region spans 17-56 (IYLRYLSYLQQVEVTTVSSQQMGKNLDVNPAQIRKDLAAF). Position 91-96 (91-96 (GAGHLG)) interacts with NAD(+).

This sequence belongs to the transcriptional regulatory Rex family. In terms of assembly, homodimer.

It is found in the cytoplasm. Modulates transcription in response to changes in cellular NADH/NAD(+) redox state. The sequence is that of Redox-sensing transcriptional repressor Rex from Brevibacillus brevis (strain 47 / JCM 6285 / NBRC 100599).